The sequence spans 2523 residues: uncharacterized protein (2523 aa).

The protein belongs to the mycobacterial PPE family.

Its function is as follows. Probably plays a role in host phagosome maturation arrest. This is an uncharacterized protein from Mycobacterium tuberculosis (strain ATCC 25618 / H37Rv).